We begin with the raw amino-acid sequence, 64 residues long: Large ribosomal subunit protein bL35 (64 aa).

Disordered stretches follow at residues 1–22 (MPKAKTHSGASKRFRRTGTGKI) and 34–64 (EHKPTTRTRRLEGRTTVSANDTKRVNSLLNG). The segment covering 34–46 (EHKPTTRTRRLEG) has biased composition (basic and acidic residues). Residues 50 to 64 (VSANDTKRVNSLLNG) are compositionally biased toward polar residues.

This sequence belongs to the bacterial ribosomal protein bL35 family.

The polypeptide is Large ribosomal subunit protein bL35 (Mycolicibacterium paratuberculosis (strain ATCC BAA-968 / K-10) (Mycobacterium paratuberculosis)).